The primary structure comprises 287 residues: Lycopene elongase/hydratase (287 aa).

7 helical membrane passes run 15–35 (ISWINTAYPFGLAYLLNAGEI), 37–57 (WLFWLGIVFFLIPYNIAMYGI), 87–107 (TLLWASAISTIPFLVILFIFG), 137–157 (FIDALTSSTHFTSPALIGATI), 166–186 (MWIALGSFFLWGMASQILGAV), 218–238 (LLAAVLVTTLPNPAWIIGIAI), and 265–285 (VFLWLNYFVGAVITILLIAIH).

It belongs to the UbiA prenyltransferase family.

The protein resides in the cell membrane. The enzyme catalyses all-trans-lycopene + dimethylallyl diphosphate + A + H2O = nonaflavuxanthin + AH2 + diphosphate. The catalysed reaction is nonaflavuxanthin + dimethylallyl diphosphate + A + H2O = flavuxanthin + AH2 + diphosphate. It functions in the pathway carotenoid biosynthesis. Catalyzes the elongation of the C(40) carotenoid all-trans-lycopene to the acyclic C(50) carotenoid flavuxanthin during decaprenoxanthin biosynthesis. Acts as a bifunctional enzyme that catalyzes the elongation of lycopene by attaching a C(5) isoprene unit at C-2, as well as the hydroxylation of the new isoprene unit. The enzyme acts at both ends of the substrate, forming the C(50) carotenoid flavuxanthin via the C(45) intermediate nonaflavuxanthin. The polypeptide is Lycopene elongase/hydratase (Corynebacterium glutamicum (strain ATCC 13032 / DSM 20300 / JCM 1318 / BCRC 11384 / CCUG 27702 / LMG 3730 / NBRC 12168 / NCIMB 10025 / NRRL B-2784 / 534)).